The chain runs to 116 residues: Ferredoxin (116 aa).

2 4Fe-4S ferredoxin-type domains span residues Thr-2–Arg-31 and Phe-35–Pro-64. Positions 9 and 17 each coordinate [3Fe-4S] cluster. 4 residues coordinate [4Fe-4S] cluster: Cys-21, Cys-44, Cys-47, and Cys-50. A [3Fe-4S] cluster-binding site is contributed by Cys-54.

The cofactor is [4Fe-4S] cluster. [3Fe-4S] cluster serves as cofactor.

Ferredoxins are iron-sulfur proteins that transfer electrons in a wide variety of metabolic reactions. The chain is Ferredoxin (fdxA) from Rickettsia conorii (strain ATCC VR-613 / Malish 7).